Reading from the N-terminus, the 75-residue chain is Small ribosomal subunit protein bS18c (75 aa).

This sequence belongs to the bacterial ribosomal protein bS18 family. In terms of assembly, part of the 30S ribosomal subunit.

It is found in the plastid. The protein resides in the chloroplast. This is Small ribosomal subunit protein bS18c from Psilotum nudum (Whisk fern).